The following is a 1194-amino-acid chain: Multidrug efflux ATP-binding/permease protein Rv0194 (1194 aa).

Transmembrane regions (helical) follow at residues 20-40, 56-76, 130-150, 153-173, 258-278, and 279-299; these read LLLGFGAALAGTVIAVLVPLV, LAPWAVVLVAAAGATYLLMYV, LLFDVPNVLRHVLTLLLGVAV, WLSVPLALLAVLLVPVIGLIA, FALGGWMAAQGSITVGTFVAF, and WACLTLLARPACDLAGMLTIA. Residues 21–301 enclose the ABC transmembrane type-1 1 domain; that stretch reads LLGFGAALAG…LAGMLTIAQQ (281 aa). The 235-residue stretch at 334 to 568 folds into the ABC transporter 1 domain; it reads LEFQRVSFGY…CPRYRELLSP (235 aa). Residue 367–374 participates in ATP binding; that stretch reads GAPGSGKS. A run of 6 helical transmembrane segments spans residues 628–648, 660–680, 743–763, 765–785, 847–867, and 878–898; these read ALSLLLVAVQTCAGLLPPLLI, VLSALWWAALAGTATVVIRWV, LVVAVISVVTLVGILVALLAI, ARLVLLIFTTMPVLALATWQF, LLALYYPFVALLCSLATTLVL, and VISVGALVTYLLYIELLYTPI. The region spanning 628–910 is the ABC transmembrane type-1 2 domain; that stretch reads ALSLLLVAVQ…LAQMFDDYQR (283 aa). Residues 942–1177 form the ABC transporter 2 domain; it reads VVFDAVHYSY…GGHYSRLWAA (236 aa). 976–983 contributes to the ATP binding site; it reads GSTGSGKS.

It belongs to the ABC transporter superfamily. Lipid exporter (TC 3.A.1.106) family.

It localises to the cell inner membrane. Its activity is regulated as follows. Efflux is inhibited by reserpine. Overexpression in M.smegmatis increases resistance to erythromycin, ampicillin, novobiocin and vancomycin. It also reduces accumulation of ethidium bromide in the cell. This Mycobacterium tuberculosis (strain ATCC 25618 / H37Rv) protein is Multidrug efflux ATP-binding/permease protein Rv0194.